Consider the following 1083-residue polypeptide: Ubiquitin carboxyl-terminal hydrolase 1 (1083 aa).

Residues 30-165 (RSCVHFDKYV…KKDLLLEVVK (136 aa)) form a UBP-type zinc finger. Zn(2+) is bound by residues Cys32, His34, Cys56, Cys59, Cys95, Cys98, Cys103, His115, His119, His125, Cys139, and Cys142. The 882-residue stretch at 202-1083 (RGLVNLGNTC…EAYILFYERI (882 aa)) folds into the USP domain. The active-site Nucleophile is the Cys211. Disordered stretches follow at residues 387 to 424 (KDSE…DNET) and 450 to 486 (GSTE…ASGI). Basic and acidic residues-rich tracts occupy residues 409-419 (SDHKIQSRPET) and 455-473 (LMHD…EDVR). A compositionally biased stretch (polar residues) spans 474–485 (ATQSNEETSASG). The active-site Proton acceptor is the His1029.

Belongs to the peptidase C19 family.

The enzyme catalyses Thiol-dependent hydrolysis of ester, thioester, amide, peptide and isopeptide bonds formed by the C-terminal Gly of ubiquitin (a 76-residue protein attached to proteins as an intracellular targeting signal).. Recognizes and hydrolyzes the peptide bond at the C-terminal Gly of ubiquitin. Involved in the processing of poly-ubiquitin precursors as well as that of ubiquitinated proteins. Is involved in resistance to the arginine analog canavanine (CAN). The chain is Ubiquitin carboxyl-terminal hydrolase 1 (UBP1) from Arabidopsis thaliana (Mouse-ear cress).